A 292-amino-acid chain; its full sequence is ATP synthase gamma chain (292 aa).

This sequence belongs to the ATPase gamma chain family. F-type ATPases have 2 components, CF(1) - the catalytic core - and CF(0) - the membrane proton channel. CF(1) has five subunits: alpha(3), beta(3), gamma(1), delta(1), epsilon(1). CF(0) has three main subunits: a, b and c.

It localises to the cell inner membrane. Produces ATP from ADP in the presence of a proton gradient across the membrane. The gamma chain is believed to be important in regulating ATPase activity and the flow of protons through the CF(0) complex. The sequence is that of ATP synthase gamma chain from Maridesulfovibrio salexigens (strain ATCC 14822 / DSM 2638 / NCIMB 8403 / VKM B-1763) (Desulfovibrio salexigens).